We begin with the raw amino-acid sequence, 519 residues long: Mannuronan C5-epimerase (519 aa).

A signal peptide spans 1–25; it reads MNLHPHLRHSLLASALLLASGLATA. 6 PbH1 repeats span residues 219 to 246, 281 to 303, 305 to 328, 330 to 352, 354 to 376, and 377 to 399; these read GTET…SISQ, TQDF…DPHD, SHRL…IVSR, VNDS…VIDR, SVNN…TLYE, and SGDN…RVRN. H302 (proton acceptor) is an active-site residue.

It belongs to the D-mannuronate C5-epimerase family.

The protein localises to the periplasm. The enzyme catalyses [(1-&gt;4)-beta-D-mannuronosyl](n) = [alginate](n). The protein operates within glycan biosynthesis; alginate biosynthesis. Its function is as follows. Catalyzes the epimerization of beta-D-mannuronate to alpha-L-guluronate during the synthesis of the linear polysaccharide alginate. In addition, is part of a periplasmic protein complex that protects alginate from degradation by AlgL by channeling the newly formed alginate polymer through a scaffold that transfers the alginate polymer through the periplasmic space to the outer membrane secretin AlgE. The sequence is that of Mannuronan C5-epimerase (algG) from Pseudomonas putida (strain ATCC 47054 / DSM 6125 / CFBP 8728 / NCIMB 11950 / KT2440).